The sequence spans 138 residues: Eukaryotic translation initiation factor 1A (138 aa).

Over residues 1–15 the composition is skewed to basic residues; it reads MPKNKGKGGKNRRRG. Residues 1–28 are disordered; the sequence is MPKNKGKGGKNRRRGKNENENEKRELTY. The span at 16–27 shows a compositional bias: basic and acidic residues; it reads KNENENEKRELT. One can recognise an S1-like domain in the interval 22-96; that stretch reads EKRELTYAEE…EKGDVILKYT (75 aa).

Belongs to the eIF-1A family.

Seems to be required for maximal rate of protein biosynthesis. Enhances ribosome dissociation into subunits and stabilizes the binding of the initiator Met-tRNA(I) to 40 S ribosomal subunits. This chain is Eukaryotic translation initiation factor 1A (tif11), found in Schizosaccharomyces pombe (strain 972 / ATCC 24843) (Fission yeast).